We begin with the raw amino-acid sequence, 444 residues long: Tubulin beta chain (444 aa).

An MREI motif motif is present at residues 1 to 4 (MREI). Gln11 contributes to the GTP binding site. A Phosphoserine modification is found at Ser40. At Thr55 the chain carries Phosphothreonine. At Lys58 the chain carries N6-acetyllysine; alternate. Lys58 is subject to N6-succinyllysine; alternate. Lys58 is covalently cross-linked (Glycyl lysine isopeptide (Lys-Gly) (interchain with G-Cter in ubiquitin); alternate). GTP contacts are provided by Glu69, Ser138, Gly142, Thr143, and Gly144. Glu69 is a binding site for Mg(2+). Ser172 bears the Phosphoserine; by CDK1 mark. Residues Asn204 and Asn226 each contribute to the GTP site. Thr285 and Thr290 each carry phosphothreonine. The residue at position 318 (Arg318) is an Omega-N-methylarginine. A Glycyl lysine isopeptide (Lys-Gly) (interchain with G-Cter in ubiquitin) cross-link involves residue Lys324. The disordered stretch occupies residues 423-444 (QQYQDATAEEEEDFGEEAEEEA). A compositionally biased stretch (acidic residues) spans 429 to 444 (TAEEEEDFGEEAEEEA). 5-glutamyl polyglutamate occurs at positions 434, 438, 439, and 441. Glu438, Glu439, Glu441, Glu442, and Glu443 each carry 5-glutamyl glycine.

It belongs to the tubulin family. Heterodimer of alpha and beta chains. A typical microtubule is a hollow water-filled tube with an outer diameter of 25 nm and an inner diameter of 15 nM. Alpha-beta heterodimers associate head-to-tail to form protofilaments running lengthwise along the microtubule wall with the beta-tubulin subunit facing the microtubule plus end conferring a structural polarity. Microtubules usually have 13 protofilaments but different protofilament numbers can be found in some organisms and specialized cells. Interacts with CIMAP3. Interacts with DIAPH1. Interacts with MX1. May interact with RNABP10. Interacts with CFAP157. Nascent tubulin polypeptide interacts (via beta-tubulin MREI motif) with TTC5/STRAP; this interaction results in tubulin mRNA-targeted degradation. The cofactor is Mg(2+). In terms of processing, some glutamate residues at the C-terminus are polyglycylated, resulting in polyglycine chains on the gamma-carboxyl group. Glycylation is mainly limited to tubulin incorporated into axonemes (cilia and flagella) whereas glutamylation is prevalent in neuronal cells, centrioles, axonemes, and the mitotic spindle. Both modifications can coexist on the same protein on adjacent residues, and lowering polyglycylation levels increases polyglutamylation, and reciprocally. Cilia and flagella glycylation is required for their stability and maintenance. Flagella glycylation controls sperm motility. Post-translationally, some glutamate residues at the C-terminus are polyglutamylated, resulting in polyglutamate chains on the gamma-carboxyl group. Polyglutamylation plays a key role in microtubule severing by spastin (SPAST). SPAST preferentially recognizes and acts on microtubules decorated with short polyglutamate tails: severing activity by SPAST increases as the number of glutamates per tubulin rises from one to eight, but decreases beyond this glutamylation threshold. Glutamylation is also involved in cilia motility. Phosphorylated on Ser-172 by CDK1 during the cell cycle, from metaphase to telophase, but not in interphase. This phosphorylation inhibits tubulin incorporation into microtubules.

The protein localises to the cytoplasm. It is found in the cytoskeleton. In terms of biological role, tubulin is the major constituent of microtubules, a cylinder consisting of laterally associated linear protofilaments composed of alpha- and beta-tubulin heterodimers. Microtubules grow by the addition of GTP-tubulin dimers to the microtubule end, where a stabilizing cap forms. Below the cap, tubulin dimers are in GDP-bound state, owing to GTPase activity of alpha-tubulin. The protein is Tubulin beta chain (TUBB) of Sus scrofa (Pig).